The primary structure comprises 493 residues: Cobyric acid synthase (493 aa).

One can recognise a GATase cobBQ-type domain in the interval 246–440 (PIDIAVIKMP…IHGVFDGVAF (195 aa)). The active-site Nucleophile is the C326. The active site involves H432.

Belongs to the CobB/CobQ family. CobQ subfamily.

Its pathway is cofactor biosynthesis; adenosylcobalamin biosynthesis. In terms of biological role, catalyzes amidations at positions B, D, E, and G on adenosylcobyrinic A,C-diamide. NH(2) groups are provided by glutamine, and one molecule of ATP is hydrogenolyzed for each amidation. The polypeptide is Cobyric acid synthase (Clostridium botulinum (strain Loch Maree / Type A3)).